Consider the following 186-residue polypeptide: UPF0200 protein Mbar_A0975 (186 aa).

8-15 (GMPASGKS) serves as a coordination point for ATP.

The protein belongs to the UPF0200 family.

This chain is UPF0200 protein Mbar_A0975, found in Methanosarcina barkeri (strain Fusaro / DSM 804).